The primary structure comprises 190 residues: Potassium-transporting ATPase KdpC subunit (190 aa).

The helical transmembrane segment at 13-33 (IGFLLLTLVCGVLYPGVVTVF) threads the bilayer.

The protein belongs to the KdpC family. In terms of assembly, the system is composed of three essential subunits: KdpA, KdpB and KdpC.

The protein resides in the cell membrane. In terms of biological role, part of the high-affinity ATP-driven potassium transport (or Kdp) system, which catalyzes the hydrolysis of ATP coupled with the electrogenic transport of potassium into the cytoplasm. This subunit acts as a catalytic chaperone that increases the ATP-binding affinity of the ATP-hydrolyzing subunit KdpB by the formation of a transient KdpB/KdpC/ATP ternary complex. The protein is Potassium-transporting ATPase KdpC subunit of Listeria monocytogenes serovar 1/2a (strain ATCC BAA-679 / EGD-e).